The sequence spans 199 residues: Nucleoid occlusion factor SlmA (199 aa).

An HTH tetR-type domain is found at R10–L71. Residues T34–F53 constitute a DNA-binding region (H-T-H motif). Residues N120–V140 are a coiled coil.

The protein belongs to the nucleoid occlusion factor SlmA family. Homodimer. Interacts with FtsZ.

The protein resides in the cytoplasm. It localises to the nucleoid. In terms of biological role, required for nucleoid occlusion (NO) phenomenon, which prevents Z-ring formation and cell division over the nucleoid. Acts as a DNA-associated cell division inhibitor that binds simultaneously chromosomal DNA and FtsZ, and disrupts the assembly of FtsZ polymers. SlmA-DNA-binding sequences (SBS) are dispersed on non-Ter regions of the chromosome, preventing FtsZ polymerization at these regions. This Photorhabdus laumondii subsp. laumondii (strain DSM 15139 / CIP 105565 / TT01) (Photorhabdus luminescens subsp. laumondii) protein is Nucleoid occlusion factor SlmA.